The chain runs to 296 residues: Phosphatidylglycerol--prolipoprotein diacylglyceryl transferase (296 aa).

Helical transmembrane passes span 10-30 (IAFSLGPVKVHWYGLMYLAAF), 57-77 (LLFYGMLGVVLGGRIGYMLFY), 92-112 (VWEGGMSFHGGLLGVLVACWL), and 119-139 (LHFFDVMDFVAPLVPLGLGFG). Residue Arg-140 participates in a 1,2-diacyl-sn-glycero-3-phospho-(1'-sn-glycerol) binding. Helical transmembrane passes span 194–214 (QLYEAALEGVVMFVVLWTFSM), 220–240 (YALSGLFALLYGVFRFIVEFV), and 254–274 (WLTMGQILSLPLIAVGLALLA).

Belongs to the Lgt family.

The protein localises to the cell inner membrane. The enzyme catalyses L-cysteinyl-[prolipoprotein] + a 1,2-diacyl-sn-glycero-3-phospho-(1'-sn-glycerol) = an S-1,2-diacyl-sn-glyceryl-L-cysteinyl-[prolipoprotein] + sn-glycerol 1-phosphate + H(+). Its pathway is protein modification; lipoprotein biosynthesis (diacylglyceryl transfer). Catalyzes the transfer of the diacylglyceryl group from phosphatidylglycerol to the sulfhydryl group of the N-terminal cysteine of a prolipoprotein, the first step in the formation of mature lipoproteins. This chain is Phosphatidylglycerol--prolipoprotein diacylglyceryl transferase, found in Xanthomonas oryzae pv. oryzae (strain MAFF 311018).